Here is a 1556-residue protein sequence, read N- to C-terminus: Ubiquitin carboxyl-terminal hydrolase 47 (1556 aa).

The segment at 117 to 231 (MKSDGEKAKS…AKKTAKVTSK (115 aa)) is disordered. Low complexity predominate over residues 146-156 (ASGSSSPSKAK). Residues Ser-172 and Ser-173 each carry the phosphoserine modification. The span at 180-189 (IKTTAAKISK) shows a compositional bias: low complexity. Residues 191–200 (GSEKAPRASP) are compositionally biased toward basic and acidic residues. The span at 208–219 (TEINSKNTSSES) shows a compositional bias: polar residues. The residue at position 238 (Ser-238) is a Phosphoserine. The USP domain maps to 396-779 (VGLVNQAMTC…NAYMLMYRQV (384 aa)). The active-site Nucleophile is the Cys-405. Composition is skewed to polar residues over residues 628-642 (NRSG…QLNG) and 661-673 (LSSG…SSSQ). The segment at 628–697 (NRSGNSGEQN…SSSTSKSAKQ (70 aa)) is disordered. The span at 688 to 697 (SSSTSKSAKQ) shows a compositional bias: low complexity. Residue His-720 is the Proton acceptor of the active site. The disordered stretch occupies residues 1087–1148 (EPMSQPSPSH…LSSPEDEAAS (62 aa)). Residues 1109–1125 (DGDRTLVETDNMAHRGG) show a composition bias toward basic and acidic residues. Positions 1128–1141 (SQVSSTSHSPQLSS) are enriched in low complexity. Phosphoserine occurs at positions 1131, 1132, 1140, 1141, 1199, 1201, and 1205.

The protein belongs to the peptidase C19 family. Interacts with ttk.

The protein localises to the nucleus. It carries out the reaction Thiol-dependent hydrolysis of ester, thioester, amide, peptide and isopeptide bonds formed by the C-terminal Gly of ubiquitin (a 76-residue protein attached to proteins as an intracellular targeting signal).. Functionally, ubiquitin-specific protease that deubiquitinates target proteins to regulate different cellular and developmental pathways. Functions downstream of Dsor1/MEK to positively regulate the Ras/MAPK signaling pathway. Likely to modulate the pathway during various cellular and developmental processes including rl/MAPK activation by the receptors InR, Egfr and sevenless/sev. Functions in the post-translational stabilization of rl/MAPK levels in a mechanism that is independent of rl activity and opposes the activity of the E2 enzyme Unc6 and the putative E3 ligases poe, Ufd4 and Kcmf1, which mediate the ubiquitination and proteasomal degradation of rl. During eye development it may also act downstream of rl/MAPK to negatively regulate the Ras/MAPK signaling pathway by stabilizing the transcriptional repressor ttk and consequently inhibiting photoreceptor cell development. This suggests that at least during eye development, it may act in both the positive and negative regulation of the Ras/MAPK signaling pathway to mediate the development of different cell types. Positively regulates border follicle cell migration during oogenesis by mediating the deubiquitination and stabilization of slbo. In the wing disks it positively regulates wg signaling by stabilizing arm. Has an effect on position-effect variegation. The polypeptide is Ubiquitin carboxyl-terminal hydrolase 47 (Drosophila melanogaster (Fruit fly)).